A 59-amino-acid chain; its full sequence is Sec-independent protein translocase protein TatA (59 aa).

Residues methionine 1–glycine 21 form a helical membrane-spanning segment.

The protein belongs to the TatA/E family. Forms a complex with TatC.

It localises to the cell inner membrane. Its function is as follows. Part of the twin-arginine translocation (Tat) system that transports large folded proteins containing a characteristic twin-arginine motif in their signal peptide across membranes. TatA could form the protein-conducting channel of the Tat system. The sequence is that of Sec-independent protein translocase protein TatA from Flavobacterium johnsoniae (strain ATCC 17061 / DSM 2064 / JCM 8514 / BCRC 14874 / CCUG 350202 / NBRC 14942 / NCIMB 11054 / UW101) (Cytophaga johnsonae).